Here is a 775-residue protein sequence, read N- to C-terminus: Semaphorin-3E (775 aa).

The first 25 residues, methionine 1–serine 25, serve as a signal peptide directing secretion. The Sema domain occupies arginine 32–phenylalanine 516. An N-linked (GlcNAc...) asparagine glycan is attached at asparagine 44. The cysteines at positions 105 and 115 are disulfide-linked. N-linked (GlcNAc...) asparagine glycosylation is present at asparagine 126. Cysteine 133 and cysteine 142 are disulfide-bonded. Asparagine 175 and asparagine 330 each carry an N-linked (GlcNAc...) asparagine glycan. 3 disulfide bridges follow: cysteine 270/cysteine 382, cysteine 294/cysteine 342, and cysteine 519/cysteine 537. The Ig-like C2-type domain occupies alanine 581–threonine 669. Asparagine 596 carries N-linked (GlcNAc...) asparagine glycosylation. Cysteine 654 and cysteine 729 are disulfide-bonded.

The protein belongs to the semaphorin family. As to quaternary structure, interacts with PLXND1. Detected in neurons in the thalamus. Detected in embryonic vasculature. Developing lungs, developing skeletal elements and ventral horns of the developing neural tube. Correlates positively with tumor progression.

It is found in the secreted. Functionally, plays an important role in signaling via the cell surface receptor PLXND1. Mediates reorganization of the actin cytoskeleton, leading to the retraction of cell projections. Promotes focal adhesion disassembly and inhibits adhesion of endothelial cells to the extracellular matrix. Regulates angiogenesis, both during embryogenesis and after birth. Can down-regulate sprouting angiogenesis. Required for normal vascular patterning during embryogenesis. Plays an important role in ensuring the specificity of synapse formation. The chain is Semaphorin-3E (Sema3e) from Mus musculus (Mouse).